Here is a 778-residue protein sequence, read N- to C-terminus: Hyaluronate lyase (778 aa).

Positions 1–33 (MSWNRRSFLGALGVTCLAGAGMVPIVRPRTAAA) form a signal peptide, tat-type signal. Catalysis depends on residues Asn200, His250, and Tyr259.

The protein belongs to the polysaccharide lyase 8 family. Predicted to be exported by the Tat system. The position of the signal peptide cleavage has not been experimentally proven.

It carries out the reaction [hyaluronan](n) = n 3-(4-deoxy-beta-D-gluc-4-enuronosyl)-N-acetyl-D-glucosamine + H2O. With respect to regulation, is salt-dependent and is active over a wide range of NaCl concentrations. Activity is slightly promoted by Ni(2+), and inhibited by most of the tested metal ions, including Li(+), K(+), Ba(2+), Mg(2+), Zn(2+), Ca(2+), Mn(2+) and Al(3+). Its function is as follows. Degrades hyaluronic acid into unsaturated disaccharides as the end products. Exhibits very low activity against various types of chondroitin sulfate variants. In Thermasporomyces composti, this protein is Hyaluronate lyase.